Here is a 345-residue protein sequence, read N- to C-terminus: Holliday junction branch migration complex subunit RuvB (345 aa).

The large ATPase domain (RuvB-L) stretch occupies residues 4-185 (TDRLIAPSTQ…FGIVSRLEFY (182 aa)). ATP-binding positions include leucine 24, arginine 25, glycine 66, lysine 69, threonine 70, threonine 71, 132 to 134 (EDY), arginine 175, tyrosine 185, and arginine 222. Threonine 70 provides a ligand contact to Mg(2+). Positions 186–256 (TADELARIVH…IADAALKMLD (71 aa)) are small ATPAse domain (RuvB-S). Residues 259 to 345 (KLGFDVMDRK…KIGTGELWQQ (87 aa)) are head domain (RuvB-H). DNA is bound by residues arginine 295, arginine 314, and arginine 319.

This sequence belongs to the RuvB family. In terms of assembly, homohexamer. Forms an RuvA(8)-RuvB(12)-Holliday junction (HJ) complex. HJ DNA is sandwiched between 2 RuvA tetramers; dsDNA enters through RuvA and exits via RuvB. An RuvB hexamer assembles on each DNA strand where it exits the tetramer. Each RuvB hexamer is contacted by two RuvA subunits (via domain III) on 2 adjacent RuvB subunits; this complex drives branch migration. In the full resolvosome a probable DNA-RuvA(4)-RuvB(12)-RuvC(2) complex forms which resolves the HJ.

Its subcellular location is the cytoplasm. It catalyses the reaction ATP + H2O = ADP + phosphate + H(+). Its function is as follows. The RuvA-RuvB-RuvC complex processes Holliday junction (HJ) DNA during genetic recombination and DNA repair, while the RuvA-RuvB complex plays an important role in the rescue of blocked DNA replication forks via replication fork reversal (RFR). RuvA specifically binds to HJ cruciform DNA, conferring on it an open structure. The RuvB hexamer acts as an ATP-dependent pump, pulling dsDNA into and through the RuvAB complex. RuvB forms 2 homohexamers on either side of HJ DNA bound by 1 or 2 RuvA tetramers; 4 subunits per hexamer contact DNA at a time. Coordinated motions by a converter formed by DNA-disengaged RuvB subunits stimulates ATP hydrolysis and nucleotide exchange. Immobilization of the converter enables RuvB to convert the ATP-contained energy into a lever motion, pulling 2 nucleotides of DNA out of the RuvA tetramer per ATP hydrolyzed, thus driving DNA branch migration. The RuvB motors rotate together with the DNA substrate, which together with the progressing nucleotide cycle form the mechanistic basis for DNA recombination by continuous HJ branch migration. Branch migration allows RuvC to scan DNA until it finds its consensus sequence, where it cleaves and resolves cruciform DNA. The chain is Holliday junction branch migration complex subunit RuvB from Methylobacillus flagellatus (strain ATCC 51484 / DSM 6875 / VKM B-1610 / KT).